Consider the following 400-residue polypeptide: Na(+)/H(+) antiporter NhaA 1 (400 aa).

11 helical membrane passes run 25-45 (IVLM…FSSM), 67-87 (ILHW…GMEI), 103-123 (ILPV…YALF), 130-150 (IIGW…ILSL), 159-179 (IIIF…IVIA), 184-204 (SEIS…IILA), 213-233 (WLYI…GVHE), 264-284 (VLTP…NSGI), 303-323 (IIFG…YILV), 339-359 (LYGA…VSSL), and 372-392 (ISII…FKII).

Belongs to the NhaA Na(+)/H(+) (TC 2.A.33) antiporter family.

The protein localises to the cell membrane. It carries out the reaction Na(+)(in) + 2 H(+)(out) = Na(+)(out) + 2 H(+)(in). Na(+)/H(+) antiporter that extrudes sodium in exchange for external protons. This is Na(+)/H(+) antiporter NhaA 1 from Clostridium beijerinckii (strain ATCC 51743 / NCIMB 8052) (Clostridium acetobutylicum).